A 301-amino-acid polypeptide reads, in one-letter code: Putative glycosyltransferase MJ1113 (301 aa).

8 helical membrane-spanning segments follow: residues 2 to 22 (GHYF…SAVL), 62 to 82 (FIPF…IIGI), 95 to 115 (LILL…NSYV), 117 to 137 (LIEI…TNML), 140 to 160 (FNGL…LVLF), 164 to 184 (YTTG…LLIF), 191 to 211 (VFPG…LAVV), and 280 to 300 (VTVL…ISLI).

Belongs to the glycosyltransferase 4 family.

Its subcellular location is the cell membrane. The protein is Putative glycosyltransferase MJ1113 of Methanocaldococcus jannaschii (strain ATCC 43067 / DSM 2661 / JAL-1 / JCM 10045 / NBRC 100440) (Methanococcus jannaschii).